Here is a 230-residue protein sequence, read N- to C-terminus: MEKNIPKHIAIIMDGNGRWAKKRGLARSFGHMEGAKTLRKALEYLTEIGVKYLTVYAFSTENWNRPQDEVSTLMKLFLKYIKNERKNMMKNKIRFFVSGRKNNVPEKLQKEIEKLEEETKNNDKITLNIAFNYGSRAEIVDAVNRIIKDGKENITEEDFSKYLYNDFPDPDLVIRTSGEMRISNFLLWQIAYSELYITDVLWPDFDEKEIDKAIESYNQRERRFGGVKNV.

Residue aspartate 14 is part of the active site. Aspartate 14 lines the Mg(2+) pocket. Substrate contacts are provided by residues 15 to 18, tryptophan 19, arginine 27, histidine 31, and 59 to 61; these read GNGR and STE. Catalysis depends on asparagine 62, which acts as the Proton acceptor. Substrate-binding positions include tryptophan 63, arginine 65, arginine 175, and 181 to 183; that span reads RIS. Position 194 (glutamate 194) interacts with Mg(2+).

The protein belongs to the UPP synthase family. Homodimer. Mg(2+) is required as a cofactor.

Catalyzes the condensation of isopentenyl diphosphate (IPP) with allylic pyrophosphates generating different type of terpenoids. The protein is Isoprenyl transferase of Fusobacterium nucleatum subsp. nucleatum (strain ATCC 25586 / DSM 15643 / BCRC 10681 / CIP 101130 / JCM 8532 / KCTC 2640 / LMG 13131 / VPI 4355).